Here is a 331-residue protein sequence, read N- to C-terminus: Adenosine deaminase (331 aa).

Zn(2+)-binding residues include H12 and H14. Substrate-binding residues include H14, D16, and G170. A Zn(2+)-binding site is contributed by H197. E200 functions as the Proton donor in the catalytic mechanism. D278 contacts Zn(2+).

It belongs to the metallo-dependent hydrolases superfamily. Adenosine and AMP deaminases family. Adenosine deaminase subfamily. It depends on Zn(2+) as a cofactor.

The enzyme catalyses adenosine + H2O + H(+) = inosine + NH4(+). It carries out the reaction 2'-deoxyadenosine + H2O + H(+) = 2'-deoxyinosine + NH4(+). In terms of biological role, catalyzes the hydrolytic deamination of adenosine and 2-deoxyadenosine. This is Adenosine deaminase from Vibrio vulnificus (strain CMCP6).